Here is a 417-residue protein sequence, read N- to C-terminus: Aminoacyltransferase FemA (417 aa).

Belongs to the FemABX family.

Its subcellular location is the cytoplasm. The catalysed reaction is beta-D-GlcNAc-(1-&gt;4)-Mur2Ac(oyl-L-Ala-D-isoglutaminyl-L-Lys-(N(6)-Gly)-D-Ala-D-Ala)-di-trans,octa-cis-undecaprenyl diphosphate + 2 glycyl-tRNA(Gly) = MurNAc-L-Ala-D-isoglutaminyl-L-Lys-(N(6)-tri-Gly)-D-Ala-D-Ala-diphospho-di-trans,octa-cis-undecaprenyl-GlcNAc + 2 tRNA(Gly) + 2 H(+). In terms of biological role, catalyzes the incorporation of amino acid(s) into the interchain peptide bridge of peptidoglycan, using aminoacyl-tRNA as amino acid donor. This Staphylococcus epidermidis protein is Aminoacyltransferase FemA (femA).